Reading from the N-terminus, the 489-residue chain is uncharacterized protein (489 aa).

11 helical membrane passes run 29-49, 67-87, 90-110, 119-139, 152-172, 186-206, 276-296, 308-328, 351-371, 397-417, and 418-438; these read FIAS…TGLG, LLYA…KYLG, WALA…WYFD, IFTG…TAYI, FIAT…FIAF, AVYI…ILFI, LNNV…TLIL, IIGL…ELGW, GGAL…IVSV, AAGM…LGQG, and IIYF…TSIF.

It localises to the membrane. This is an uncharacterized protein from Schizosaccharomyces pombe (strain 972 / ATCC 24843) (Fission yeast).